We begin with the raw amino-acid sequence, 314 residues long: Putative gluconeogenesis factor (314 aa).

This sequence belongs to the gluconeogenesis factor family.

It is found in the cytoplasm. Functionally, required for morphogenesis under gluconeogenic growth conditions. The chain is Putative gluconeogenesis factor from Thermotoga maritima (strain ATCC 43589 / DSM 3109 / JCM 10099 / NBRC 100826 / MSB8).